Consider the following 74-residue polypeptide: MLDQFIKHRLKLKENNKLGALTFQIVLNGIFGRTNSIYFALYEPSLHGSVCGQLIMLEVFTEMVSDDLLWCNTD.

The protein localises to the mitochondrion. This is an uncharacterized protein from Marchantia polymorpha (Common liverwort).